We begin with the raw amino-acid sequence, 46 residues long: Diuretic hormone (46 aa).

Isoleucine 46 bears the Isoleucine amide mark.

The protein belongs to the sauvagine/corticotropin-releasing factor/urotensin I family.

It localises to the secreted. Regulation of fluid secretion. Stimulates primary urine secretion by Malpighian tubules and causes a dose-dependent stimulation of cAMP levels in the tubules. This Acheta domesticus (House cricket) protein is Diuretic hormone.